The chain runs to 497 residues: Pseudooxynicotine dehydrogenase (497 aa).

The tat-type signal signal peptide spans M1 to A43. Residues A70, E89, R97, W114, V286, S462, and I472 each contribute to the FAD site.

It belongs to the flavin monoamine oxidase family. Homodimer. FAD serves as cofactor. Post-translationally, predicted to be exported by the Tat system. The position of the signal peptide cleavage has not been experimentally proven.

Its subcellular location is the periplasm. It catalyses the reaction pseudooxynicotine + 2 Fe(III)-[cytochrome c] + H2O = 4-oxo-4-(pyridin-3-yl)butanal + methylamine + 2 Fe(II)-[cytochrome c] + 2 H(+). Its pathway is alkaloid degradation; nicotine degradation. Its activity is regulated as follows. Strongly inhibited by Ag(+), Co(2+), Cu(2+) and Hg(2+). Functionally, involved in nicotine degradation. Catalyzes the deamination of pseudooxynicotine to 3-succinoylsemialdehyde-pyridine. This is Pseudooxynicotine dehydrogenase from Pseudomonas sp.